Consider the following 1293-residue polypeptide: Phosphoribosylformylglycinamidine synthase (1293 aa).

Residues 305-316 (GAATGSGGEIRD) and Ala676 each bind ATP. The disordered stretch occupies residues 305–327 (GAATGSGGEIRDEGATGRGSKPK). Residues Asp677, Glu716, Asn720, and Asp884 each contribute to the Mg(2+) site. Residue Ser886 coordinates ATP. A Glutamine amidotransferase type-1 domain is found at 1040–1293 (MAILREQGVN…MFRNARVNLG (254 aa)). Cys1133 (nucleophile) is an active-site residue. Active-site residues include His1258 and Glu1260.

This sequence in the N-terminal section; belongs to the FGAMS family. As to quaternary structure, monomer.

It localises to the cytoplasm. The enzyme catalyses N(2)-formyl-N(1)-(5-phospho-beta-D-ribosyl)glycinamide + L-glutamine + ATP + H2O = 2-formamido-N(1)-(5-O-phospho-beta-D-ribosyl)acetamidine + L-glutamate + ADP + phosphate + H(+). It participates in purine metabolism; IMP biosynthesis via de novo pathway; 5-amino-1-(5-phospho-D-ribosyl)imidazole from N(2)-formyl-N(1)-(5-phospho-D-ribosyl)glycinamide: step 1/2. In terms of biological role, phosphoribosylformylglycinamidine synthase involved in the purines biosynthetic pathway. Catalyzes the ATP-dependent conversion of formylglycinamide ribonucleotide (FGAR) and glutamine to yield formylglycinamidine ribonucleotide (FGAM) and glutamate. This chain is Phosphoribosylformylglycinamidine synthase, found in Shewanella sp. (strain MR-4).